A 167-amino-acid polypeptide reads, in one-letter code: Effector CFEM8 (167 aa).

The first 17 residues, 1 to 17 (MQFSIVVMAALASLASA), serve as a signal peptide directing secretion. A CFEM domain is found at 18–112 (QSMDGIPTCA…TPAAAAPYPT (95 aa)). 4 disulfides stabilise this stretch: cysteine 26-cysteine 68, cysteine 30-cysteine 63, cysteine 40-cysteine 47, and cysteine 49-cysteine 85. Aspartate 44 serves as a coordination point for heme. N-linked (GlcNAc...) asparagine glycans are attached at residues asparagine 117 and asparagine 135. A lipid anchor (GPI-anchor amidated glycine) is attached at glycine 143. Residues 144–167 (SAPQNVAGGLAGIFGLVVAAAFAL) constitute a propeptide, removed in mature form.

It belongs to the RBT5 family.

It is found in the cell membrane. Its subcellular location is the secreted. It localises to the host nucleus. The protein localises to the host cell membrane. Appears to function during host infection, and may play a role in suppressing the host immune response. The protein is Effector CFEM8 of Marssonina brunnea f. sp. multigermtubi (strain MB_m1) (Marssonina leaf spot fungus).